The primary structure comprises 166 residues: Cofilin-1 (166 aa).

Ala2 is subject to N-acetylalanine. Phosphoserine is present on residues Ser3 and Ser8. An ADF-H domain is found at 4–153; that stretch reads GVAVSDGVIK…KDRCTLAEKL (150 aa). N6-acetyllysine is present on Lys13. A Phosphothreonine modification is found at Thr25. The Nuclear localization signal motif lies at 30 to 34; sequence KKRKK. Phosphoserine is present on Ser41. Tyr68 carries the phosphotyrosine modification. N6-acetyllysine is present on Lys73. Lys132 is covalently cross-linked (Glycyl lysine isopeptide (Lys-Gly) (interchain with G-Cter in SUMO2)). Tyr140 carries the post-translational modification Phosphotyrosine. Residue Lys144 is modified to N6-acetyllysine. At Ser156 the chain carries Phosphoserine.

The protein belongs to the actin-binding proteins ADF family. As to quaternary structure, can bind G- and F-actin in a 1:1 ratio of cofilin to actin. It is a major component of intranuclear and cytoplasmic actin rods. Interacts with the subcortical maternal complex (SCMC) via interaction with TLE6 and NLRP5. Interacts with C9orf72. Post-translationally, inactivated by phosphorylation on Ser-3. Phosphorylated on Ser-3 in resting cells. Dephosphorylated by PDXP/chronophin; this restores its activity in promoting actin filament depolymerization. The phosphorylation of Ser-24 may prevent recognition of the nuclear localization signal. Phosphorylated via a ARRB1-RAC1-LIMK1-PAK1 cascade upon active ligand stimulation of atypical chemokine receptor ACKR2.

Its subcellular location is the nucleus matrix. It is found in the cytoplasm. The protein localises to the cytoskeleton. It localises to the cell projection. The protein resides in the ruffle membrane. Its subcellular location is the lamellipodium membrane. It is found in the lamellipodium. The protein localises to the growth cone. It localises to the axon. In terms of biological role, binds to F-actin and exhibits pH-sensitive F-actin depolymerizing activity. Important for normal progress through mitosis and normal cytokinesis. In conjunction with the subcortical maternal complex (SCMC), plays an essential role for zygotes to progress beyond the first embryonic cell divisions via regulation of actin dynamics. Required for the centralization of the mitotic spindle and symmetric division of zygotes. Plays a role in the regulation of cell morphology and cytoskeletal organization in epithelial cells. Required for the up-regulation of atypical chemokine receptor ACKR2 from endosomal compartment to cell membrane, increasing its efficiency in chemokine uptake and degradation. Required for neural tube morphogenesis and neural crest cell migration. This chain is Cofilin-1 (CFL1), found in Bos taurus (Bovine).